We begin with the raw amino-acid sequence, 108 residues long: UPF0060 membrane protein YnfA (108 aa).

The Periplasmic segment spans residues 1 to 5 (MIKTT). A helical membrane pass occupies residues 6–26 (LLFFATALCEIIGCFLPWLWL). The Cytoplasmic segment spans residues 27–30 (KRNA). The chain crosses the membrane as a helical span at residues 31–51 (SIWLLLPAGISLALFVWLLTL). Over 52–60 (HPAASGRVY) the chain is Periplasmic. The chain crosses the membrane as a helical span at residues 61 to 81 (AAYGGVYVCTALMWLRVVDGV). At 82–84 (KLT) the chain is on the cytoplasmic side. A helical transmembrane segment spans residues 85 to 105 (LYDWTGPLIALCGMLIIVVGW). The Periplasmic segment spans residues 106–108 (GRT).

This sequence belongs to the UPF0060 family.

Its subcellular location is the cell inner membrane. In Escherichia coli O157:H7, this protein is UPF0060 membrane protein YnfA.